The primary structure comprises 1182 residues: DNA-directed RNA polymerase subunit beta' (1182 aa).

Zn(2+)-binding residues include Cys59, Cys61, Cys74, and Cys77. The Mg(2+) site is built by Asp449, Asp451, and Asp453. Zn(2+)-binding residues include Cys794, Cys868, Cys875, and Cys878.

Belongs to the RNA polymerase beta' chain family. As to quaternary structure, the RNAP catalytic core consists of 2 alpha, 1 beta, 1 beta' and 1 omega subunit. When a sigma factor is associated with the core the holoenzyme is formed, which can initiate transcription. Requires Mg(2+) as cofactor. It depends on Zn(2+) as a cofactor.

It catalyses the reaction RNA(n) + a ribonucleoside 5'-triphosphate = RNA(n+1) + diphosphate. Its function is as follows. DNA-dependent RNA polymerase catalyzes the transcription of DNA into RNA using the four ribonucleoside triphosphates as substrates. This Clostridium acetobutylicum (strain ATCC 824 / DSM 792 / JCM 1419 / IAM 19013 / LMG 5710 / NBRC 13948 / NRRL B-527 / VKM B-1787 / 2291 / W) protein is DNA-directed RNA polymerase subunit beta'.